Consider the following 468-residue polypeptide: Interstitial collagenase (468 aa).

A signal peptide spans 1–18; sequence MPGLPLLLLLLWGVGSHG. The propeptide at 19 to 98 is activation peptide; it reads FPAASETQEQ…PRCGVPDVAQ (80 aa). The short motif at 89–96 is the Cysteine switch element; sequence PRCGVPDV. Zn(2+) is bound at residue cysteine 91. Asparagine 119 carries N-linked (GlcNAc...) asparagine glycosylation. The Ca(2+) site is built by aspartate 123 and aspartate 157. 2 residues coordinate Zn(2+): histidine 167 and aspartate 169. The Ca(2+) site is built by aspartate 174, glycine 175, glutamate 177, and glutamine 179. Histidine 182 serves as a coordination point for Zn(2+). Glycine 189, glycine 191, and aspartate 193 together coordinate Ca(2+). Histidine 195 is a Zn(2+) binding site. Aspartate 197, glutamate 198, and aspartate 200 together coordinate Ca(2+). Zn(2+) is bound at residue histidine 217. Residue glutamate 218 is part of the active site. Zn(2+) contacts are provided by histidine 221 and histidine 227. Threonine 273 is modified (phosphothreonine). Hemopexin repeat units lie at residues 274-323, 324-370, 373-421, and 422-465; these read PKVC…WPHL, PNGL…FGFP, VNHI…FPGI, and GNKV…WFNC. A disulfide bridge links cysteine 277 with cysteine 465. Aspartate 284 and glutamine 328 together coordinate Ca(2+). Residue tyrosine 359 is modified to Phosphotyrosine; by PKDCC. Residues aspartate 377 and aspartate 426 each coordinate Ca(2+).

This sequence belongs to the peptidase M10A family. Requires Ca(2+) as cofactor. Zn(2+) serves as cofactor. Tyrosine phosphorylated in platelets by PKDCC/VLK.

Its subcellular location is the secreted. The protein resides in the extracellular space. It localises to the extracellular matrix. The catalysed reaction is Cleavage of the triple helix of collagen at about three-quarters of the length of the molecule from the N-terminus, at 775-Gly-|-Ile-776 in the alpha1(I) chain. Cleaves synthetic substrates and alpha-macroglobulins at bonds where P1' is a hydrophobic residue.. Can be activated without removal of the activation peptide. In terms of biological role, cleaves collagens of types I, II, and III at one site in the helical domain. Also cleaves collagens of types VII and X. The chain is Interstitial collagenase (MMP1) from Oryctolagus cuniculus (Rabbit).